The sequence spans 888 residues: Bifunctional lysine-specific demethylase and histidyl-hydroxylase NO66 (888 aa).

Disordered regions lie at residues 83 to 157 (AAAK…GSFS), 187 to 208 (SNNSDFDFDSDGDSNDFDDSDA), and 261 to 446 (NSTS…NKLS). The segment covering 98-108 (REKNIAKKQPE) has biased composition (basic and acidic residues). The segment covering 116-139 (ENVQKQLENGQENNGTLINLSNGK) has biased composition (polar residues). Residues 192-207 (FDFDSDGDSNDFDDSD) show a composition bias toward acidic residues. Residues 273–284 (VEPRKAAKRNEP) show a composition bias toward basic and acidic residues. Residues 392-403 (KNKNNDNNNIDT) show a composition bias toward low complexity. The segment covering 404–429 (NNKKDANNKKDANNNKDINNKKDANN) has biased composition (basic and acidic residues). Low complexity predominate over residues 430–444 (NKDTNNNKDNNNKNK). The 146-residue stretch at 564-709 (CSIRILNPST…NLLEVLMPSV (146 aa)) folds into the JmjC domain. Positions 610, 612, and 675 each coordinate Fe cation.

It belongs to the ROX family. NO66 subfamily. Requires Fe(2+) as cofactor.

The protein resides in the nucleus. The enzyme catalyses N(6),N(6)-dimethyl-L-lysyl(36)-[histone H3] + 2 2-oxoglutarate + 2 O2 = L-lysyl(36)-[histone H3] + 2 formaldehyde + 2 succinate + 2 CO2. In terms of biological role, oxygenase that can act as both a histone lysine demethylase and a ribosomal histidine hydroxylase. Specifically demethylates 'Lys-4' (H3K4me) and 'Lys-36' (H3K36me) of histone H3, thereby playing a central role in histone code. The chain is Bifunctional lysine-specific demethylase and histidyl-hydroxylase NO66 from Drosophila mojavensis (Fruit fly).